A 517-amino-acid chain; its full sequence is Gamma-1-syntrophin (517 aa).

Residues 57–140 (TVTIRRQTVG…EVTLTVSFLK (84 aa)) enclose the PDZ domain. Residues 283–390 (QIVYMGWCEA…WERAFQTATF (108 aa)) form the PH domain.

The protein belongs to the syntrophin family. In terms of assembly, interacts with the dystrophin protein DMD and related proteins DTNA and DTNB. Interacts with DGKZ.

The protein localises to the cytoplasm. It localises to the cytoskeleton. Its subcellular location is the nucleus. In terms of biological role, adapter protein that binds to and probably organizes the subcellular localization of a variety of proteins. May link various receptors to the actin cytoskeleton and the dystrophin glycoprotein complex. May participate in regulating the subcellular location of diacylglycerol kinase-zeta to ensure that diacylglycerol is rapidly inactivated following receptor activation. The protein is Gamma-1-syntrophin (Sntg1) of Mus musculus (Mouse).